The chain runs to 116 residues: Ferredoxin (116 aa).

4Fe-4S ferredoxin-type domains are found at residues 2–31 (TYVV…EGER) and 35–64 (FMLV…PESP). Residues Cys-9 and Cys-17 each contribute to the [3Fe-4S] cluster site. [4Fe-4S] cluster-binding residues include Cys-21, Cys-44, Cys-47, and Cys-50. Position 54 (Cys-54) interacts with [3Fe-4S] cluster.

It depends on [4Fe-4S] cluster as a cofactor. [3Fe-4S] cluster serves as cofactor.

In terms of biological role, ferredoxins are iron-sulfur proteins that transfer electrons in a wide variety of metabolic reactions. The sequence is that of Ferredoxin (fdxA) from Rickettsia conorii (strain ATCC VR-613 / Malish 7).